The sequence spans 822 residues: Putative ESX-1 scaffolding and assembly protein SaeB (822 aa).

May be involved in assembly of the ESX-1 / type VII specialized secretion system (T7SS), which exports several proteins including EsxA and EsxB. Involved in DNA conjugation in recipient (MDK8) but not donor (mc(2)155) strain. The protein is Putative ESX-1 scaffolding and assembly protein SaeB of Mycolicibacterium smegmatis (strain ATCC 700084 / mc(2)155) (Mycobacterium smegmatis).